The sequence spans 398 residues: Cystathionine gamma-lyase (398 aa).

Serine 50 is modified (phosphoserine). Arginine 61, tyrosine 113, and arginine 118 together coordinate substrate. At lysine 211 the chain carries N6-(pyridoxal phosphate)lysine. Position 338 (glutamate 338) interacts with substrate.

Belongs to the trans-sulfuration enzymes family. As to quaternary structure, homotetramer. Interacts with CALM in a calcium-dependent manner. Requires pyridoxal 5'-phosphate as cofactor.

The protein resides in the cytoplasm. It catalyses the reaction L,L-cystathionine + H2O = 2-oxobutanoate + L-cysteine + NH4(+). The enzyme catalyses L-homoserine = 2-oxobutanoate + NH4(+). The catalysed reaction is L-selenocystathionine + H2O = L-selenocysteine + 2-oxobutanoate + NH4(+). It carries out the reaction L-cysteine + H2O = hydrogen sulfide + pyruvate + NH4(+) + H(+). It catalyses the reaction L-homocysteine + H2O = 2-oxobutanoate + hydrogen sulfide + NH4(+) + H(+). Its pathway is amino-acid biosynthesis; L-cysteine biosynthesis; L-cysteine from L-homocysteine and L-serine: step 2/2. In terms of biological role, catalyzes the last step in the trans-sulfuration pathway from L-methionine to L-cysteine in a pyridoxal-5'-phosphate (PLP)-dependent manner, which consists on cleaving the L,L-cystathionine molecule into L-cysteine, ammonia and 2-oxobutanoate. Part of the L-cysteine derived from the trans-sulfuration pathway is utilized for biosynthesis of the ubiquitous antioxidant glutathione. Besides its role in the conversion of L-cystathionine into L-cysteine, it utilizes L-cysteine and L-homocysteine as substrates (at much lower rates than L,L-cystathionine) to produce hydrogen sulfide (H2S). In vitro, it converts two L-cysteine molecules into lanthionine and H2S, and two L-homocysteine molecules to homolanthionine and H2S, which can be particularly relevant under conditions of severe hyperhomocysteinemia. Lanthionine and homolanthionine are structural homologs of L,L-cystathionine that differ by the absence or presence of an extra methylene group, respectively. Acts as a cysteine-protein sulfhydrase by mediating sulfhydration of target proteins: sulfhydration consists of converting -SH groups into -SSH on specific cysteine residues of target proteins such as GAPDH, PTPN1 and NF-kappa-B subunit RELA, thereby regulating their function. By generating the gasotransmitter H2S, it participates in a number of physiological processes such as vasodilation, bone protection, and inflammation. Plays an essential role in myogenesis by contributing to the biogenesis of H2S in skeletal muscle tissue. Can also accept homoserine as substrate. Catalyzes the elimination of selenocystathionine (which can be derived from the diet) to yield selenocysteine, ammonia and 2-oxobutanoate. The polypeptide is Cystathionine gamma-lyase (Cth) (Rattus norvegicus (Rat)).